A 3432-amino-acid chain; its full sequence is Genome polyprotein (3432 aa).

Positions 2–15 (TKKPGGPGKNRAIN) are interaction with host EXOC1. Topologically, residues 2–109 (TKKPGGPGKN…RKQNKRGGNE (108 aa)) are cytoplasmic. The segment at 37 to 72 (LLDGRGPVRFVLALITFFKFTALAPTKALLGRWKAV) is hydrophobic; homodimerization of capsid protein C. A propeptide spans 106 to 127 (GGNEGSIMWLASLAVVIACAGA) (ER anchor for the capsid protein C, removed in mature form by serine protease NS3). The chain crosses the membrane as a helical span at residues 110–130 (GSIMWLASLAVVIACAGAMKL). Residues 131–253 (SNFQGKLLMT…ATRYLMKTEN (123 aa)) lie on the Extracellular side of the membrane. Asparagine 142 carries an N-linked (GlcNAc...) asparagine; by host glycan. A helical membrane pass occupies residues 254-274 (WIIRNPGYAFLAAVLGWMLGS). At 275 to 279 (NNGQR) the chain is on the cytoplasmic side. Residues 280–294 (VVFTILLLLVAPAYS) traverse the membrane as a helical segment. The Extracellular portion of the chain corresponds to 295-746 (FNCLGMGNRD…QVFGGAFRTL (452 aa)). 6 cysteine pairs are disulfide-bonded: cysteine 297–cysteine 324, cysteine 354–cysteine 410, cysteine 354–cysteine 415, cysteine 368–cysteine 399, cysteine 386–cysteine 410, and cysteine 386–cysteine 415. Positions 392-405 (DRGWGNGCGLFGKG) are fusion peptide. N-linked (GlcNAc...) asparagine; by host glycosylation is present at asparagine 448. Intrachain disulfides connect cysteine 484–cysteine 581 and cysteine 598–cysteine 629. A helical membrane pass occupies residues 747–767 (FGGMSWITQGLMGALLLWMGV). Over 768–773 (NARDRS) the chain is Cytoplasmic. The helical transmembrane segment at 774–794 (IALAFLATGGVLVFLATNVHA) threads the bilayer. Residues 795–1219 (DTGCAIDITR…AFAEANSGGD (425 aa)) are Extracellular-facing. Cystine bridges form between cysteine 798-cysteine 809, cysteine 849-cysteine 937, cysteine 973-cysteine 1017, cysteine 1074-cysteine 1123, cysteine 1085-cysteine 1106, and cysteine 1107-cysteine 1110. N-linked (GlcNAc...) asparagine; by host glycosylation is found at asparagine 924 and asparagine 1001. The helical transmembrane segment at 1220 to 1240 (VLHLALIAVFKIQPAFLVMNM) threads the bilayer. The Cytoplasmic portion of the chain corresponds to 1241-1250 (LSTRWTNQEN). A helical membrane pass occupies residues 1251–1271 (VILVLGAAFFQLASVDLQIGV). Histidine 1272 is a topological domain (lumenal). The helical transmembrane segment at 1273 to 1293 (GILNAAAIAWMIVRAITFPTT) threads the bilayer. At 1294-1309 (SSVTMPVLALLTPGMR) the chain is on the cytoplasmic side. A helical membrane pass occupies residues 1310-1330 (ALYLDTYRIILLVIGICSLLH). Residues 1331-1341 (ERKKTMAKKKG) are Lumenal-facing. Residues 1342-1362 (AVLLGLALTSTGWFSPTTIAA) traverse the membrane as a helical segment. Residues 1363–1374 (GLMVCNPNKKRG) are Cytoplasmic-facing. Interaction with human SPCS1 stretches follow at residues 1374–1423 (GWPA…GKAT) and 1458–1505 (FHLI…TKRG). Residues 1375-1395 (WPATEFLSAVGLMFAIVGGLA) traverse the membrane as a helical segment. At 1396–1398 (ELD) the chain is on the lumenal side. Residues 1399-1419 (IESMSIPFMLAGLMAVSYVVS) form a helical membrane-spanning segment. Residues 1420–1476 (GKATDMWLERAADISWEMDAAITGSSRRLDVKLDDDGDFHLIDDPGVPWKVWVLRMS) are Cytoplasmic-facing. The tract at residues 1427–1466 (LERAADISWEMDAAITGSSRRLDVKLDDDGDFHLIDDPGV) is interacts with and activates NS3 protease. Residues 1477–1497 (CIGLAALTPWAIVPAAFGYWL) constitute an intramembrane region (helical). Residues 1498-2173 (TLKTTKRGGV…RMALEELPDA (676 aa)) lie on the Cytoplasmic side of the membrane. One can recognise a Peptidase S7 domain in the interval 1505–1682 (GGVFWDTPSP…DRQEEPVPEA (178 aa)). Active-site charge relay system; for serine protease NS3 activity residues include histidine 1555, aspartate 1579, and serine 1639. Residues 1685 to 1841 (PNMLRKRQMT…DSNAPIHDLQ (157 aa)) form the Helicase ATP-binding domain. The interval 1689–1692 (RKRQ) is important for RNA-binding. 1698–1705 (LHPGSGKT) contacts ATP. The DEAH box signature appears at 1789-1792 (DEAH). The Helicase C-terminal domain maps to 1852–2017 (GYEWITEYAG…GLVAQLYGPE (166 aa)). Position 1893 is an N6-acetyllysine; by host (lysine 1893). Residues 1950 to 1972 (NPSPITSASAAQRRGRVGRNPNQ) are disordered. Positions 2168–2172 (EELPD) are regulates the ATPase activity of NS3 helicase. The chain crosses the membrane as a helical span at residues 2174–2194 (LETITLIVAITVMTGGFFLLM). The Lumenal portion of the chain corresponds to 2195-2199 (MQRKG). Positions 2200-2220 (IGKMGLGALVLTLATFFLWAA) form an intramembrane region, helical. Residue glutamate 2221 is a topological domain, lumenal. Residues 2222-2242 (VPGTKIAGTLLIALLLMVVLI) form a helical membrane-spanning segment. Residues 2243–2257 (PEPEKQRSQTDNQLA) are Cytoplasmic-facing. A helical membrane pass occupies residues 2258-2278 (VFLICVLTVVGVVAANEYGML). Residues 2279-2311 (EKTKADLKSMFGGKTQASGLTGLPSMALDLRPA) are Lumenal-facing. Positions 2312–2332 (TAWALYGGSTVVLTPLLKHLI) form an intramembrane region, helical. At 2333-2368 (TSEYVTTSLASINSQAGSLFVLPRGVPFTDLDLTVG) the chain is on the lumenal side. The chain crosses the membrane as a helical span at residues 2369–2389 (LVFLGCWGQITLTTFLTAMVL). The Cytoplasmic segment spans residues 2390-2444 (ATLHYGYMLPGWQAEALRAAQRRTAAGIMKNAVVDGMVATDVPELERTTPLMQKK). The helical transmembrane segment at 2445–2465 (VGQVLLIGVSVAAFLVNPNVT) threads the bilayer. Topologically, residues 2466–2469 (TVRE) are lumenal. Residues 2470 to 2490 (AGVLVTAATLTLWDNGASAVW) traverse the membrane as a helical segment. Over 2491-3432 (NSTTATGLCH…DVLIQEDRVI (942 aa)) the chain is Cytoplasmic. The mRNA cap 0-1 NS5-type MT domain occupies 2528-2793 (GRPGGRTLGE…DVNLGSGTRA (266 aa)). Serine 2583 serves as a coordination point for S-adenosyl-L-methionine. Serine 2583 carries the post-translational modification Phosphoserine. Lysine 2588 (for 2'-O-MTase activity) is an active-site residue. Residues glycine 2613, tryptophan 2614, threonine 2631, lysine 2632, aspartate 2658, and valine 2659 each coordinate S-adenosyl-L-methionine. Aspartate 2673 serves as the catalytic For 2'-O-MTase activity. S-adenosyl-L-methionine is bound at residue isoleucine 2674. Active-site for 2'-O-MTase activity residues include lysine 2709 and glutamate 2745. Tyrosine 2747 lines the S-adenosyl-L-methionine pocket. Zn(2+)-binding residues include glutamate 2967, histidine 2971, cysteine 2976, and cysteine 2979. Residues 3057 to 3209 (GKMYADDTAG…KPLDDRFATA (153 aa)) enclose the RdRp catalytic domain. Zn(2+) contacts are provided by histidine 3244, cysteine 3260, and cysteine 3379.

This sequence in the N-terminal section; belongs to the class I-like SAM-binding methyltransferase superfamily. mRNA cap 0-1 NS5-type methyltransferase family. Homodimer. Interacts (via N-terminus) with host EXOC1 (via C-terminus); this interaction results in EXOC1 degradation through the proteasome degradation pathway. As to quaternary structure, forms heterodimers with envelope protein E in the endoplasmic reticulum and Golgi. In terms of assembly, homodimer; in the endoplasmic reticulum and Golgi. Interacts with protein prM. Interacts with non-structural protein 1. Interacts with host HSPA5. Homodimer; Homohexamer when secreted. Interacts with envelope protein E. NS1 interacts with NS4B. Interacts with host complement protein CFH; this interaction leads to the degradation of C3. As to quaternary structure, interacts (via N-terminus) with serine protease NS3. In terms of assembly, forms a heterodimer with serine protease NS3. May form homooligomers. Interacts with human SPCS1. Forms a heterodimer with NS2B. Interacts with non-structural protein 2A (via N-terminus). Interacts with NS4B. Interacts with unphosphorylated RNA-directed RNA polymerase NS5; this interaction stimulates RNA-directed RNA polymerase NS5 guanylyltransferase activity. Interacts with host ILF2. As to quaternary structure, interacts with serine protease NS3. In terms of assembly, homodimer. Interacts with host STAT2; this interaction inhibits the phosphorylation of the latter, and, when all viral proteins are present (polyprotein), targets STAT2 for degradation. Interacts with serine protease NS3. Mn(2+) is required as a cofactor. Mg(2+) serves as cofactor. Specific enzymatic cleavages in vivo yield mature proteins. Cleavages in the lumen of endoplasmic reticulum are performed by host signal peptidase, whereas cleavages in the cytoplasmic side are performed by serine protease NS3. Signal cleavage at the 2K-4B site requires a prior NS3 protease-mediated cleavage at the 4A-2K site. In terms of processing, cleaved in post-Golgi vesicles by a host furin, releasing the mature small envelope protein M, and peptide pr. This cleavage is incomplete as up to 30% of viral particles still carry uncleaved prM. Post-translationally, N-glycosylated. N-glycosylated. The excreted form is glycosylated and this is required for efficient secretion of the protein from infected cells. In terms of processing, acetylated by host KAT5. Acetylation modulates NS3 RNA-binding and unwinding activities and plays an important positive role for viral replication. Post-translationally, phosphorylated on serines residues. This phosphorylation may trigger NS5 nuclear localization.

It is found in the host endoplasmic reticulum membrane. It localises to the virion. The protein resides in the host nucleus. Its subcellular location is the host cytoplasm. The protein localises to the host perinuclear region. It is found in the secreted. It localises to the virion membrane. The protein resides in the host cell surface. The enzyme catalyses Selective hydrolysis of -Xaa-Xaa-|-Yaa- bonds in which each of the Xaa can be either Arg or Lys and Yaa can be either Ser or Ala.. It carries out the reaction RNA(n) + a ribonucleoside 5'-triphosphate = RNA(n+1) + diphosphate. It catalyses the reaction a ribonucleoside 5'-triphosphate + H2O = a ribonucleoside 5'-diphosphate + phosphate + H(+). The catalysed reaction is ATP + H2O = ADP + phosphate + H(+). The enzyme catalyses a 5'-end (5'-triphosphoguanosine)-ribonucleoside in mRNA + S-adenosyl-L-methionine = a 5'-end (N(7)-methyl 5'-triphosphoguanosine)-ribonucleoside in mRNA + S-adenosyl-L-homocysteine. It carries out the reaction a 5'-end (N(7)-methyl 5'-triphosphoguanosine)-ribonucleoside in mRNA + S-adenosyl-L-methionine = a 5'-end (N(7)-methyl 5'-triphosphoguanosine)-(2'-O-methyl-ribonucleoside) in mRNA + S-adenosyl-L-homocysteine + H(+). Its function is as follows. Plays a role in virus budding by binding to the cell membrane and gathering the viral RNA into a nucleocapsid that forms the core of a mature virus particle. During virus entry, may induce genome penetration into the host cytoplasm after hemifusion induced by the surface proteins. Can migrate to the cell nucleus where it modulates host functions. Overcomes the anti-viral effects of host EXOC1 by sequestering and degrading the latter through the proteasome degradation pathway. Functionally, inhibits RNA silencing by interfering with host Dicer. Prevents premature fusion activity of envelope proteins in trans-Golgi by binding to envelope protein E at pH 6.0. After virion release in extracellular space, gets dissociated from E dimers. In terms of biological role, acts as a chaperone for envelope protein E during intracellular virion assembly by masking and inactivating envelope protein E fusion peptide. prM is the only viral peptide matured by host furin in the trans-Golgi network probably to avoid catastrophic activation of the viral fusion activity in acidic Golgi compartment prior to virion release. prM-E cleavage is inefficient, and many virions are only partially matured. These uncleaved prM would play a role in immune evasion. Its function is as follows. May play a role in virus budding. Exerts cytotoxic effects by activating a mitochondrial apoptotic pathway through M ectodomain. May display a viroporin activity. Functionally, binds to host cell surface receptor and mediates fusion between viral and cellular membranes. Efficient virus attachment to cell is, at least in part, mediated by host HSPA5. Envelope protein is synthesized in the endoplasmic reticulum in the form of heterodimer with protein prM. They play a role in virion budding in the ER, and the newly formed immature particle is covered with 60 spikes composed of heterodimer between precursor prM and envelope protein E. The virion is transported to the Golgi apparatus where the low pH causes dissociation of PrM-E heterodimers and formation of E homodimers. prM-E cleavage is inefficient, and many virions are only partially matured. These uncleaved prM would play a role in immune evasion. Involved in immune evasion, pathogenesis and viral replication. Once cleaved off the polyprotein, is targeted to three destinations: the viral replication cycle, the plasma membrane and the extracellular compartment. Essential for viral replication. Required for formation of the replication complex and recruitment of other non-structural proteins to the ER-derived membrane structures. Excreted as a hexameric lipoparticle that plays a role against host immune response. Antagonizing the complement function. Binds to the host macrophages and dendritic cells. Inhibits signal transduction originating from Toll-like receptor 3 (TLR3). In terms of biological role, component of the viral RNA replication complex that functions in virion assembly and antagonizes the host alpha/beta interferon antiviral response. Its function is as follows. Required cofactor for the serine protease function of NS3. May have membrane-destabilizing activity and form viroporins. Functionally, displays three enzymatic activities: serine protease, NTPase and RNA helicase. NS3 serine protease, in association with NS2B, performs its autocleavage and cleaves the polyprotein at dibasic sites in the cytoplasm: C-prM, NS2A-NS2B, NS2B-NS3, NS3-NS4A, NS4A-2K and NS4B-NS5. NS3 RNA helicase binds RNA and unwinds dsRNA in the 3' to 5' direction. Regulates the ATPase activity of the NS3 helicase activity. NS4A allows NS3 helicase to conserve energy during unwinding. In terms of biological role, functions as a signal peptide for NS4B and is required for the interferon antagonism activity of the latter. Its function is as follows. Induces the formation of ER-derived membrane vesicles where the viral replication takes place. Inhibits interferon (IFN)-induced host STAT1 phosphorylation and nuclear translocation, thereby preventing the establishment of cellular antiviral state by blocking the IFN-alpha/beta pathway. Inhibits STAT2 translocation in the nucleus after IFN-alpha treatment. Functionally, replicates the viral (+) and (-) RNA genome. Performs the capping of genomes in the cytoplasm. NS5 methylates viral RNA cap at guanine N-7 and ribose 2'-O positions. Besides its role in RNA genome replication, also prevents the establishment of cellular antiviral state by blocking the interferon-alpha/beta (IFN-alpha/beta) signaling pathway. Inhibits host TYK2 and STAT2 phosphorylation, thereby preventing activation of JAK-STAT signaling pathway. This chain is Genome polyprotein, found in Japanese encephalitis virus (strain SA-14) (JEV).